Reading from the N-terminus, the 495-residue chain is Glycerol kinase (495 aa).

Residue Thr11 coordinates ADP. The ATP site is built by Thr11, Thr12, and Ser13. Thr11 is a sn-glycerol 3-phosphate binding site. Arg81, Glu82, Tyr133, and Asp242 together coordinate sn-glycerol 3-phosphate. Glycerol contacts are provided by Arg81, Glu82, Tyr133, Asp242, and Gln243. ADP-binding residues include Thr264, Gly307, Gly407, and Asn411. Thr264, Gly307, and Gly407 together coordinate ATP.

The protein belongs to the FGGY kinase family.

The catalysed reaction is glycerol + ATP = sn-glycerol 3-phosphate + ADP + H(+). The protein operates within polyol metabolism; glycerol degradation via glycerol kinase pathway; sn-glycerol 3-phosphate from glycerol: step 1/1. Inhibited by fructose 1,6-bisphosphate (FBP). In terms of biological role, key enzyme in the regulation of glycerol uptake and metabolism. Catalyzes the phosphorylation of glycerol to yield sn-glycerol 3-phosphate. The sequence is that of Glycerol kinase from Thermus brockianus.